A 469-amino-acid chain; its full sequence is uncharacterized protein (469 aa).

Residues 11 to 65 are a coiled coil; sequence LFISVAFSQESVEDLKRLLEEYKKKIQEIERRLEELEKAKKEEEKKKEAVALKPT.

This is an uncharacterized protein from Aquifex aeolicus (strain VF5).